The chain runs to 346 residues: Patr class I histocompatibility antigen, CH28 alpha chain (346 aa).

An N-terminal signal peptide occupies residues 1–21 (MAPRSLLLLFSGALALTETWA). The tract at residues 22 to 111 (GSHSLRYFST…LLRRYNQSEA (90 aa)) is alpha-1. The Extracellular segment spans residues 22–305 (GSHSLRYFST…EQSPQPTIPI (284 aa)). N-linked (GlcNAc...) asparagine glycosylation is present at Asn107. The segment at 112 to 203 (GSHTLQGMNG…ENGKETLQRA (92 aa)) is alpha-2. 2 disulfides stabilise this stretch: Cys122–Cys185 and Cys224–Cys280. Residues 204-295 (DPPKAHIAHH…GLPQPLTLRW (92 aa)) are alpha-3. The region spanning 206–294 (PKAHIAHHPI…EGLPQPLTLR (89 aa)) is the Ig-like C1-type domain. Residues 296–305 (EQSPQPTIPI) form a connecting peptide region. The helical transmembrane segment at 306–329 (VGIVAGLVVLGAVVTGAVVAAVMW) threads the bilayer. The Cytoplasmic segment spans residues 330 to 346 (RKKSSDRNRGSYSQAAV).

Belongs to the MHC class I family. In terms of assembly, heterodimer of an alpha chain and a beta chain (beta-2-microglobulin).

The protein localises to the membrane. Functionally, involved in the presentation of foreign antigens to the immune system. This Pan troglodytes (Chimpanzee) protein is Patr class I histocompatibility antigen, CH28 alpha chain.